We begin with the raw amino-acid sequence, 184 residues long: Protein GrpE (184 aa).

Over residues 1 to 17 (MQHEDKTPEQQENKTPE) the composition is skewed to basic and acidic residues. Residues 1-39 (MQHEDKTPEQQENKTPETELQQENAPATPQEAGAAGSID) form a disordered region. The span at 18 to 27 (TELQQENAPA) shows a compositional bias: polar residues.

The protein belongs to the GrpE family. Homodimer.

It is found in the cytoplasm. Its function is as follows. Participates actively in the response to hyperosmotic and heat shock by preventing the aggregation of stress-denatured proteins, in association with DnaK and GrpE. It is the nucleotide exchange factor for DnaK and may function as a thermosensor. Unfolded proteins bind initially to DnaJ; upon interaction with the DnaJ-bound protein, DnaK hydrolyzes its bound ATP, resulting in the formation of a stable complex. GrpE releases ADP from DnaK; ATP binding to DnaK triggers the release of the substrate protein, thus completing the reaction cycle. Several rounds of ATP-dependent interactions between DnaJ, DnaK and GrpE are required for fully efficient folding. This is Protein GrpE from Methylobacillus flagellatus (strain ATCC 51484 / DSM 6875 / VKM B-1610 / KT).